Reading from the N-terminus, the 105-residue chain is Putative neurotoxin 10 (105 aa).

Residues 1 to 21 form the signal peptide; sequence MTVSCSKVLLSLCLFLILLEA.

The protein belongs to the scolopendra neurotoxin 10 family. In terms of processing, contains 3 disulfide bonds. As to expression, expressed by the venom gland.

The protein resides in the secreted. In Scolopendra mutilans (Chinese red-headed centipede), this protein is Putative neurotoxin 10.